Consider the following 365-residue polypeptide: Protein RecA (365 aa).

ATP is bound at residue 81-88 (GPESSGKT).

It belongs to the RecA family.

Its subcellular location is the cytoplasm. Functionally, can catalyze the hydrolysis of ATP in the presence of single-stranded DNA, the ATP-dependent uptake of single-stranded DNA by duplex DNA, and the ATP-dependent hybridization of homologous single-stranded DNAs. It interacts with LexA causing its activation and leading to its autocatalytic cleavage. This is Protein RecA from Borreliella burgdorferi (strain ATCC 35210 / DSM 4680 / CIP 102532 / B31) (Borrelia burgdorferi).